The chain runs to 105 residues: U2-lycotoxin-Ls1a (105 aa).

The signal sequence occupies residues 1 to 17 (MIKYVLISALLVVAVYS). Positions 18–41 (FTIEDNEDALLEEAEDELDTEEER) are excised as a propeptide. Intrachain disulfides connect Cys51-Cys67, Cys58-Cys97, Cys60-Cys83, and Cys69-Cys81.

The protein belongs to the neurotoxin 04 (omega-agtx) family. 01 (type I omega-agtx) subfamily. In terms of tissue distribution, expressed by the venom gland.

It localises to the secreted. Functionally, insecticidal to house crickets. It induces an excitatory slow-onset impact that leads to irreversible spastic paralysis. It also modifies human voltage-gated potassium channel Kv1.5/KCNA5. Most likely, it binds to the voltage-sensing domain of the channel, suggesting it does not block the pore but prevents its opening at physiological membrane potentials. The recombinant peptide binds to the channel in an irreversible manner and slows down the hKv1.5 current activation kinetics. It is not toxic to mice, when intracranially injected (at 0.5 ug/g mouse). In Lycosa singoriensis (Wolf spider), this protein is U2-lycotoxin-Ls1a.